A 139-amino-acid polypeptide reads, in one-letter code: Transcription antitermination protein NusB (139 aa).

It belongs to the NusB family.

Its function is as follows. Involved in transcription antitermination. Required for transcription of ribosomal RNA (rRNA) genes. Binds specifically to the boxA antiterminator sequence of the ribosomal RNA (rrn) operons. The sequence is that of Transcription antitermination protein NusB from Natranaerobius thermophilus (strain ATCC BAA-1301 / DSM 18059 / JW/NM-WN-LF).